We begin with the raw amino-acid sequence, 79 residues long: Acyl carrier protein (79 aa).

The 76-residue stretch at 2 to 77 folds into the Carrier domain; it reads ENIEQRVKKI…QAIDYVTAHL (76 aa). At serine 37 the chain carries O-(pantetheine 4'-phosphoryl)serine.

It belongs to the acyl carrier protein (ACP) family. Post-translationally, 4'-phosphopantetheine is transferred from CoA to a specific serine of apo-ACP by AcpS. This modification is essential for activity because fatty acids are bound in thioester linkage to the sulfhydryl of the prosthetic group.

The protein localises to the cytoplasm. Its pathway is lipid metabolism; fatty acid biosynthesis. Its function is as follows. Carrier of the growing fatty acid chain in fatty acid biosynthesis. The chain is Acyl carrier protein from Aromatoleum aromaticum (strain DSM 19018 / LMG 30748 / EbN1) (Azoarcus sp. (strain EbN1)).